Reading from the N-terminus, the 133-residue chain is ATP synthase epsilon chain, sodium ion specific (133 aa).

This sequence belongs to the ATPase epsilon chain family. As to quaternary structure, F-type ATPases have 2 components, CF(1) - the catalytic core - and CF(0) - the membrane proton channel. CF(1) has five subunits: alpha(3), beta(3), gamma(1), delta(1), epsilon(1). CF(0) has three main subunits: a, b and c.

It localises to the cell membrane. With respect to regulation, inhibited by nitrate. Functionally, produces ATP from ADP in the presence of a sodium gradient across the membrane. The sequence is that of ATP synthase epsilon chain, sodium ion specific (atpC) from Acetobacterium woodii (strain ATCC 29683 / DSM 1030 / JCM 2381 / KCTC 1655 / WB1).